The sequence spans 374 residues: Inner membrane transport permease YhhJ (374 aa).

The Cytoplasmic portion of the chain corresponds to 1 to 22; that stretch reads MRHLRNIFNLGIKELRSLLGDK. A helical membrane pass occupies residues 23–43; sequence AMLTLIVFSFTVSVYSSATVT. The Periplasmic segment spans residues 44 to 172; the sequence is PGSLNLAPIA…TRMRFNPNLD (129 aa). Residues 133–369 enclose the ABC transmembrane type-2 domain; it reads NGYIQNIING…TIALLRFRKT (237 aa). A helical membrane pass occupies residues 173 to 193; it reads PAWFGGVMAIINNITMLAIVL. The Cytoplasmic segment spans residues 194–229; that stretch reads TGSALIREREHGTVEHLLVMPITPFEIMMAKIWSMG. Residues 230-250 form a helical membrane-spanning segment; it reads LVVLVVSGLSLVLMVKGVLGV. At 251 to 255 the chain is on the periplasmic side; that stretch reads PIEGS. Residues 256–276 form a helical membrane-spanning segment; it reads IPLFMLGVALSLFATTSIGIF. Topologically, residues 277-283 are cytoplasmic; sequence MGTIARS. A helical membrane pass occupies residues 284–304; it reads MPQLGLLVILVLLPLQMLSGG. At 305-342 the chain is on the periplasmic side; sequence STPRESMPQMVQDIMLTMPTTHFVSLAQAILYRGAGFE. The helical transmembrane segment at 343 to 363 threads the bilayer; it reads IVWPQFLTLMAIGGAFFTIAL. The Cytoplasmic portion of the chain corresponds to 364–374; it reads LRFRKTIGTMA.

The protein belongs to the ABC-2 integral membrane protein family.

Its subcellular location is the cell inner membrane. The chain is Inner membrane transport permease YhhJ (yhhJ) from Escherichia coli (strain K12).